A 1399-amino-acid polypeptide reads, in one-letter code: DNA-directed RNA polymerase subunit beta' (1399 aa).

4 residues coordinate Zn(2+): C70, C72, C85, and C88. Mg(2+) is bound by residues D460, D462, and D464. Residues C814, C888, C895, and C898 each coordinate Zn(2+).

It belongs to the RNA polymerase beta' chain family. In terms of assembly, the RNAP catalytic core consists of 2 alpha, 1 beta, 1 beta' and 1 omega subunit. When a sigma factor is associated with the core the holoenzyme is formed, which can initiate transcription. Requires Mg(2+) as cofactor. It depends on Zn(2+) as a cofactor.

It carries out the reaction RNA(n) + a ribonucleoside 5'-triphosphate = RNA(n+1) + diphosphate. DNA-dependent RNA polymerase catalyzes the transcription of DNA into RNA using the four ribonucleoside triphosphates as substrates. The protein is DNA-directed RNA polymerase subunit beta' of Pseudomonas entomophila (strain L48).